The primary structure comprises 337 residues: Tetraacyldisaccharide 4'-kinase (337 aa).

58–65 (TVGGSGKT) lines the ATP pocket.

Belongs to the LpxK family.

It carries out the reaction a lipid A disaccharide + ATP = a lipid IVA + ADP + H(+). It participates in glycolipid biosynthesis; lipid IV(A) biosynthesis; lipid IV(A) from (3R)-3-hydroxytetradecanoyl-[acyl-carrier-protein] and UDP-N-acetyl-alpha-D-glucosamine: step 6/6. Its function is as follows. Transfers the gamma-phosphate of ATP to the 4'-position of a tetraacyldisaccharide 1-phosphate intermediate (termed DS-1-P) to form tetraacyldisaccharide 1,4'-bis-phosphate (lipid IVA). In Shewanella putrefaciens (strain CN-32 / ATCC BAA-453), this protein is Tetraacyldisaccharide 4'-kinase.